We begin with the raw amino-acid sequence, 414 residues long: TAR DNA-binding protein 43 (414 aa).

Glycyl lysine isopeptide (Lys-Gly) (interchain with G-Cter in SUMO2) cross-links involve residues lysine 79, lysine 84, lysine 95, lysine 102, and lysine 181. 2 RRM domains span residues 104 to 200 (SDLI…RCTE) and 191 to 262 (RKVF…NAEP). A Phosphoserine modification is found at serine 183. Positions 216–414 (EVVDVFIPKP…MDSKSSGWGM (199 aa)) are interaction with UBQLN2. Positions 261–274 (EPKHNSNRQLERSG) are enriched in basic and acidic residues. Disordered regions lie at residues 261–301 (EPKH…GLGN) and 341–414 (ASQQ…GWGM). Lysine 263 participates in a covalent cross-link: Glycyl lysine isopeptide (Lys-Gly) (interchain with G-Cter in SUMO2). Residues 275–301 (RFGGNPGGFGNQGGFGNSRGGGAGLGN) show a composition bias toward gly residues. Serine 292 is subject to Phosphoserine. Arginine 293 is modified (omega-N-methylarginine). 2 stretches are compositionally biased toward low complexity: residues 342–358 (SQQNQSGPSGNNQSQGS) and 368–392 (GSGNNSYSGSNSGAPLGWGSASNAG). Over residues 393–402 (SGSGFNGGFG) the composition is skewed to gly residues. Positions 405-414 (MDSKSSGWGM) are enriched in polar residues.

As to quaternary structure, homodimer. Homooligomer (via its N-terminal domain). Interacts with BRDT. Binds specifically to pyrimidine-rich motifs of TAR DNA and to single stranded TG repeated sequences. Binds to RNA, specifically to UG repeated sequences with a minimum of six contiguous repeats. Interacts with ATXN2; the interaction is RNA-dependent. Interacts with MATR3. Interacts with UBQLN2. Interacts with HNRNPA2B1. Interacts with ZNF106. Interacts with CNOT7/CAF1. Interacts with CRY2. Interacts with PPIA/CYPA; the interaction is dependent on RNA-binding activity of TARDBP and PPIase activity of PPIA/CYPA. Acetylation of PPIA/CYPA at 'Lys-125' favors the interaction of TARDBP with PPIA/CYPA. Hyperphosphorylated. Post-translationally, ubiquitinated.

It is found in the nucleus. The protein localises to the cytoplasm. The protein resides in the stress granule. Its subcellular location is the mitochondrion. Functionally, RNA-binding protein that is involved in various steps of RNA biogenesis and processing. Preferentially binds, via its two RNA recognition motifs RRM1 and RRM2, to GU-repeats on RNA molecules predominantly localized within long introns and in the 3'UTR of mRNAs. In turn, regulates the splicing of many non-coding and protein-coding RNAs including proteins involved in neuronal survival, as well as mRNAs that encode proteins relevant for neurodegenerative diseases. Plays a role in maintaining mitochondrial homeostasis by regulating the processing of mitochondrial transcripts. Also regulates mRNA stability by recruiting CNOT7/CAF1 deadenylase on mRNA 3'UTR leading to poly(A) tail deadenylation and thus shortening. In response to oxidative insult, associates with stalled ribosomes localized to stress granules (SGs) and contributes to cell survival. Also participates in the normal skeletal muscle formation and regeneration, forming cytoplasmic myo-granules and binding mRNAs that encode sarcomeric proteins. Plays a role in the maintenance of the circadian clock periodicity via stabilization of the CRY1 and CRY2 proteins in a FBXL3-dependent manner. Negatively regulates the expression of CDK6. Regulates the expression of HDAC6, ATG7 and VCP in a PPIA/CYPA-dependent manner. The polypeptide is TAR DNA-binding protein 43 (Tardbp) (Mus musculus (Mouse)).